Reading from the N-terminus, the 103-residue chain is Histone H4 variant TH091 (103 aa).

Residues 1–20 are disordered; it reads MSGRDKGGKGLGKGGAKRHR. S2 is modified (N-acetylserine). Residues K6, K9, K13, K17, and K21 each carry the N6-acetyllysine modification. The DNA-binding element occupies 17-21; it reads KRHRK.

It belongs to the histone H4 family. In terms of assembly, the nucleosome is a histone octamer containing two molecules each of H2A, H2B, H3 and H4 assembled in one H3-H4 heterotetramer and two H2A-H2B heterodimers. The octamer wraps approximately 147 bp of DNA.

It localises to the nucleus. The protein resides in the chromosome. Functionally, core component of nucleosome. Nucleosomes wrap and compact DNA into chromatin, limiting DNA accessibility to the cellular machineries which require DNA as a template. Histones thereby play a central role in transcription regulation, DNA repair, DNA replication and chromosomal stability. DNA accessibility is regulated via a complex set of post-translational modifications of histones, also called histone code, and nucleosome remodeling. The protein is Histone H4 variant TH091 of Triticum aestivum (Wheat).